A 292-amino-acid chain; its full sequence is Elongation factor Ts (292 aa).

The segment at 80 to 83 is involved in Mg(2+) ion dislocation from EF-Tu; that stretch reads TDSV.

It belongs to the EF-Ts family.

It localises to the cytoplasm. Its function is as follows. Associates with the EF-Tu.GDP complex and induces the exchange of GDP to GTP. It remains bound to the aminoacyl-tRNA.EF-Tu.GTP complex up to the GTP hydrolysis stage on the ribosome. This is Elongation factor Ts from Lactiplantibacillus plantarum (strain ATCC BAA-793 / NCIMB 8826 / WCFS1) (Lactobacillus plantarum).